The following is a 101-amino-acid chain: Small ribosomal subunit protein uS14 (101 aa).

The protein belongs to the universal ribosomal protein uS14 family. Part of the 30S ribosomal subunit. Contacts proteins S3 and S10.

Its function is as follows. Binds 16S rRNA, required for the assembly of 30S particles and may also be responsible for determining the conformation of the 16S rRNA at the A site. This is Small ribosomal subunit protein uS14 from Methylococcus capsulatus (strain ATCC 33009 / NCIMB 11132 / Bath).